A 253-amino-acid polypeptide reads, in one-letter code: Kallikrein-7 (253 aa).

Residues 1-22 form the signal peptide; sequence MARSLLLPLQILLLSLALETAG. Residues 23–29 constitute a propeptide, activation peptide; the sequence is EEAQGDK. Residues 30 to 250 enclose the Peptidase S1 domain; it reads IIDGAPCARG…FTKWINDTMK (221 aa). 6 disulfides stabilise this stretch: cysteine 36–cysteine 165, cysteine 55–cysteine 71, cysteine 137–cysteine 239, cysteine 144–cysteine 211, cysteine 176–cysteine 190, and cysteine 201–cysteine 226. Active-site charge relay system residues include histidine 70 and aspartate 112. The Charge relay system role is filled by serine 205. Asparagine 246 carries an N-linked (GlcNAc...) asparagine glycan.

Belongs to the peptidase S1 family. Kallikrein subfamily. As to expression, abundantly expressed in the skin and is expressed by keratinocytes in the epidermis. Also expressed in the brain, mammary gland, cerebellum, spinal cord and kidney. Lower levels in salivary glands, uterus, thymus, thyroid, placenta, trachea and testis. Up-regulated in ovarian carcinoma, especially late-stage serous carcinoma, compared with normal ovaries and benign adenomas (at protein level).

It localises to the secreted. The catalysed reaction is Cleavage of proteins with aromatic side chains in the P1 position.. Inhibited by Zn2+ and Cu2+ at low micromolar concentrations. Inhibited by SERPINA12. Functionally, may catalyze the degradation of intercellular cohesive structures in the cornified layer of the skin in the continuous shedding of cells from the skin surface. Specific for amino acid residues with aromatic side chains in the P1 position. Cleaves insulin A chain at '14-Tyr-|-Gln-15' and insulin B chain at '6-Leu-|-Cys-7', '16-Tyr-|-Leu-17', '25-Phe-|-Tyr-26' and '26-Tyr-|-Thr-27'. Could play a role in the activation of precursors to inflammatory cytokines. This Homo sapiens (Human) protein is Kallikrein-7 (KLK7).